The following is a 125-amino-acid chain: Small ribosomal subunit protein uS13 (125 aa).

Belongs to the universal ribosomal protein uS13 family. In terms of assembly, part of the 30S ribosomal subunit. Forms a loose heterodimer with protein S19. Forms two bridges to the 50S subunit in the 70S ribosome.

In terms of biological role, located at the top of the head of the 30S subunit, it contacts several helices of the 16S rRNA. In the 70S ribosome it contacts the 23S rRNA (bridge B1a) and protein L5 of the 50S subunit (bridge B1b), connecting the 2 subunits; these bridges are implicated in subunit movement. Contacts the tRNAs in the A and P-sites. This is Small ribosomal subunit protein uS13 from Rickettsia typhi (strain ATCC VR-144 / Wilmington).